A 117-amino-acid polypeptide reads, in one-letter code: uncharacterized protein (117 aa).

Positions 1–38 (MIIDSSRIPSFTQLHSTMTRAPLLLLCVALVLLGHVNG) are cleaved as a signal peptide.

Its subcellular location is the secreted. This is an uncharacterized protein from Homo sapiens (Human).